Consider the following 963-residue polypeptide: Kinesin-1 heavy chain (963 aa).

Position 2 is an N-acetylalanine (alanine 2). The 318-residue stretch at 8–325 folds into the Kinesin motor domain; the sequence is NIKVMCRFRP…LLFGQRAKTI (318 aa). 85–92 contributes to the ATP binding site; sequence GQTSSGKT. Lysine 213 participates in a covalent cross-link: Glycyl lysine isopeptide (Lys-Gly) (interchain with G-Cter in SUMO2). The stretch at 329–914 forms a coiled coil; that stretch reads VCVNVELTAE…AVRSKNMARR (586 aa). A disordered region spans residues 908–963; sequence SKNMARRGHSAQIAKPIRPGQHPAASPTHPGTVRGGGSFVQNNQPVGLRGGGGKQS. The globular stretch occupies residues 915–963; it reads GHSAQIAKPIRPGQHPAASPTHPGTVRGGGSFVQNNQPVGLRGGGGKQS. Serine 933 and serine 945 each carry phosphoserine. Arginine 956 carries the omega-N-methylarginine modification.

This sequence belongs to the TRAFAC class myosin-kinesin ATPase superfamily. Kinesin family. Kinesin subfamily. Oligomer composed of two heavy chains and two light chains. Interacts with GRIP1 and PPP1R42. Interacts with SYBU. Interacts with JAKMIP1. Interacts with PLEKHM2. Interacts with ECPAS. Interacts with ZFYVE27. Found in a complex with OGT, RHOT1, RHOT2 and TRAK1. Interacts with APP (via cytoplasmic domain).

The protein localises to the cytoplasm. Its subcellular location is the cytoskeleton. It localises to the cytolytic granule membrane. It is found in the lysosome membrane. In terms of biological role, microtubule-dependent motor required for normal distribution of mitochondria and lysosomes. May be involved in the mechanisms of growth arrest induced by exposure to DNA-damaging drugs or by cellular senescence. Can induce formation of neurite-like membrane protrusions in non-neuronal cells in a ZFYVE27-dependent manner. Regulates centrosome and nuclear positioning during mitotic entry. During the G2 phase of the cell cycle in a BICD2-dependent manner, antagonizes dynein function and drives the separation of nuclei and centrosomes. Required for anterograde axonal transportation of MAPK8IP3/JIP3 which is essential for MAPK8IP3/JIP3 function in axon elongation. Through binding with PLEKHM2 and ARL8B, directs lysosome movement toward microtubule plus ends. Involved in NK cell-mediated cytotoxicity. Drives the polarization of cytolytic granules and microtubule-organizing centers (MTOCs) toward the immune synapse between effector NK lymphocytes and target cells. The polypeptide is Kinesin-1 heavy chain (Kif5b) (Mus musculus (Mouse)).